The sequence spans 750 residues: Photosystem I P700 chlorophyll a apoprotein A1 (750 aa).

The next 8 membrane-spanning stretches (helical) occupy residues 70 to 93 (VFSA…FHGA), 156 to 179 (LYCT…FHYH), 195 to 219 (LNHH…HVSL), 291 to 309 (IAHH…GHMY), 346 to 369 (WHAQ…HHMY), 385 to 411 (LSLF…IFMV), 433 to 455 (AIIS…LYIH), and 531 to 549 (FLVH…LILL). Residues C573 and C582 each coordinate [4Fe-4S] cluster. The next 2 helical transmembrane spans lie at 589–610 (HVFL…HFSW) and 664–686 (LSAY…MFLF). H675 is a chlorophyll a' binding site. Chlorophyll a is bound by residues M683 and Y691. W692 is a binding site for phylloquinone. A helical membrane pass occupies residues 724–744 (AVGVTHYLLGGIATTWAFFLA).

It belongs to the PsaA/PsaB family. The PsaA/B heterodimer binds the P700 chlorophyll special pair and subsequent electron acceptors. PSI consists of a core antenna complex that captures photons, and an electron transfer chain that converts photonic excitation into a charge separation. The eukaryotic PSI reaction center is composed of at least 11 subunits. P700 is a chlorophyll a/chlorophyll a' dimer, A0 is one or more chlorophyll a, A1 is one or both phylloquinones and FX is a shared 4Fe-4S iron-sulfur center. serves as cofactor.

The protein resides in the plastid. It localises to the chloroplast thylakoid membrane. The catalysed reaction is reduced [plastocyanin] + hnu + oxidized [2Fe-2S]-[ferredoxin] = oxidized [plastocyanin] + reduced [2Fe-2S]-[ferredoxin]. PsaA and PsaB bind P700, the primary electron donor of photosystem I (PSI), as well as the electron acceptors A0, A1 and FX. PSI is a plastocyanin-ferredoxin oxidoreductase, converting photonic excitation into a charge separation, which transfers an electron from the donor P700 chlorophyll pair to the spectroscopically characterized acceptors A0, A1, FX, FA and FB in turn. Oxidized P700 is reduced on the lumenal side of the thylakoid membrane by plastocyanin. This Lobularia maritima (Sweet alyssum) protein is Photosystem I P700 chlorophyll a apoprotein A1.